A 100-amino-acid chain; its full sequence is Phosphoribosyl-ATP pyrophosphatase (100 aa).

The protein belongs to the PRA-PH family.

The protein resides in the cytoplasm. It carries out the reaction 1-(5-phospho-beta-D-ribosyl)-ATP + H2O = 1-(5-phospho-beta-D-ribosyl)-5'-AMP + diphosphate + H(+). It functions in the pathway amino-acid biosynthesis; L-histidine biosynthesis; L-histidine from 5-phospho-alpha-D-ribose 1-diphosphate: step 2/9. In Haloquadratum walsbyi (strain DSM 16790 / HBSQ001), this protein is Phosphoribosyl-ATP pyrophosphatase.